The chain runs to 302 residues: L-aminoadipate-semialdehyde dehydrogenase-phosphopantetheinyl transferase (302 aa).

Residues Arg-44, Arg-83–Lys-88, and Asn-105–His-108 each bind CoA. Mg(2+)-binding residues include Asp-126 and Glu-178. Glu-178–Lys-182 contacts CoA.

It belongs to the P-Pant transferase superfamily. AcpS family. Monomer. Mg(2+) serves as cofactor.

The protein resides in the cytoplasm. It localises to the cytosol. It carries out the reaction apo-[ACP] + CoA = holo-[ACP] + adenosine 3',5'-bisphosphate + H(+). The catalysed reaction is apo-[ACP] + acetyl-CoA = acetyl-[ACP] + adenosine 3',5'-bisphosphate + H(+). Functionally, catalyzes the post-translational modification of target proteins by phosphopantetheine. Can transfer the 4'-phosphopantetheine moiety from coenzyme A, regardless of whether the CoA is presented in the free thiol form or as an acetyl thioester, to a serine residue of a broad range of acceptors. The chain is L-aminoadipate-semialdehyde dehydrogenase-phosphopantetheinyl transferase (aasdhppt) from Xenopus laevis (African clawed frog).